Reading from the N-terminus, the 405-residue chain is MEYSEIMVRYGELSTKGKNKKDFIKQLGQNTRKALHQFDGIEVKAQHDRLHVTLNGADSTAVMDRLKGVFGIENFSPSVKVEKDIAAIKATALAMVQEIFTPGMTFKINTRRQDKQFEYDTNHLNDLLGGYILENVPGIQVKMKQPDLTLRVEVRLNGVFLSGQTIQGAGGLPVGTGGKAVMMLSGGIDSPVAAYYGMRRGVKLDMVHFFSPPYTSEQALAKAKELTARLAGYSGSIQFIQVPFTKIQETIKEKVPEGYLMTIQRRLMLRLAAAVAERRHAKGIFNGESLGQVASQTLESMAAINDVTSMPILRPLLSMDKTEIIKVAENIDTYDLSILPYEDCCTIFTPPAPKTHPDLEKSRKYEKYIDVDGLMQEALDGMIITDIHPDDNYLNQNEDVFAELL.

One can recognise a THUMP domain in the interval 60–165 (TAVMDRLKGV…LNGVFLSGQT (106 aa)). ATP contacts are provided by residues 183–184 (ML), 208–209 (HF), R265, G287, and Q296.

Belongs to the ThiI family.

Its subcellular location is the cytoplasm. The catalysed reaction is [ThiI sulfur-carrier protein]-S-sulfanyl-L-cysteine + a uridine in tRNA + 2 reduced [2Fe-2S]-[ferredoxin] + ATP + H(+) = [ThiI sulfur-carrier protein]-L-cysteine + a 4-thiouridine in tRNA + 2 oxidized [2Fe-2S]-[ferredoxin] + AMP + diphosphate. The enzyme catalyses [ThiS sulfur-carrier protein]-C-terminal Gly-Gly-AMP + S-sulfanyl-L-cysteinyl-[cysteine desulfurase] + AH2 = [ThiS sulfur-carrier protein]-C-terminal-Gly-aminoethanethioate + L-cysteinyl-[cysteine desulfurase] + A + AMP + 2 H(+). Its pathway is cofactor biosynthesis; thiamine diphosphate biosynthesis. Catalyzes the ATP-dependent transfer of a sulfur to tRNA to produce 4-thiouridine in position 8 of tRNAs, which functions as a near-UV photosensor. Also catalyzes the transfer of sulfur to the sulfur carrier protein ThiS, forming ThiS-thiocarboxylate. This is a step in the synthesis of thiazole, in the thiamine biosynthesis pathway. The sulfur is donated as persulfide by IscS. The polypeptide is Probable tRNA sulfurtransferase (Levilactobacillus brevis (strain ATCC 367 / BCRC 12310 / CIP 105137 / JCM 1170 / LMG 11437 / NCIMB 947 / NCTC 947) (Lactobacillus brevis)).